Reading from the N-terminus, the 356-residue chain is MLDRLKSIEDRYEKLNELLSDPEVVNDPKKLREYSKEQSDLQETVEVYRRYRSASEQLSDAKAMLEEKLDSDMREMVKEEISELQEEIESLTDQLKVLLIPKDPNDDKNVIMEIRGAAGGEEAALFAGNLYRMYSRYAELQGWKTEVMEANMTGTGGYKEIIFMINGNGAYSRLKYENGAHRVQRVPETESGGRIHTSTATVACLPEAEEVEVDIHEKDIRVDTFASSGPGGQSVNTTMSAVRLTHLPTGVVVSCQDEKSQIKNKEKAMKVLRARIYDKFQQEAQAEYDQNRKSAVGTGDRSERIRTYNFPQNRVTDHRIGLTIQKLDQILEGKLDEVIDALIVEDQASKLQQAES.

Gln233 carries the N5-methylglutamine modification.

Belongs to the prokaryotic/mitochondrial release factor family. In terms of processing, methylated by PrmC. Methylation increases the termination efficiency of RF1.

It is found in the cytoplasm. Functionally, peptide chain release factor 1 directs the termination of translation in response to the peptide chain termination codons UAG and UAA. The polypeptide is Peptide chain release factor 1 (Bacillus licheniformis (strain ATCC 14580 / DSM 13 / JCM 2505 / CCUG 7422 / NBRC 12200 / NCIMB 9375 / NCTC 10341 / NRRL NRS-1264 / Gibson 46)).